The following is a 229-amino-acid chain: Small ribosomal subunit protein uS3 (229 aa).

The 69-residue stretch at 39 to 107 folds into the KH type-2 domain; sequence VRQYLTEKLK…TAQINIAEIR (69 aa).

The protein belongs to the universal ribosomal protein uS3 family. Part of the 30S ribosomal subunit. Forms a tight complex with proteins S10 and S14.

Functionally, binds the lower part of the 30S subunit head. Binds mRNA in the 70S ribosome, positioning it for translation. This is Small ribosomal subunit protein uS3 from Shewanella denitrificans (strain OS217 / ATCC BAA-1090 / DSM 15013).